The following is a 571-amino-acid chain: Calcium-dependent protein kinase 16 (571 aa).

Residues 1-74 (MGLCFSSAAK…TRHTPPHGKV (74 aa)) are disordered. Gly-2 carries N-myristoyl glycine lipidation. Cys-4 carries S-palmitoyl cysteine lipidation. Residues 63 to 72 (TPTRHTPPHG) are compositionally biased toward basic residues. The 261-residue stretch at 108 to 368 (YTIGKLLGHG…AAQALSHPWV (261 aa)) folds into the Protein kinase domain. ATP is bound by residues 114 to 122 (LGHGQFGYT) and Lys-137. Asp-234 acts as the Proton acceptor in catalysis. Ser-274 carries the post-translational modification Phosphoserine. The autoinhibitory domain stretch occupies residues 374–404 (ASEIPIDISVLNNMRQFVKFSRLKQFALRAL). EF-hand domains are found at residues 411-446 (EELA…DHPW), 448-483 (LKDA…VNQL), 490-525 (KWQQ…KGSI), and 528-555 (LLEE…ASIK). Ca(2+) contacts are provided by Asp-424, Asp-426, Asn-428, Glu-435, Asp-461, Asn-463, Asp-465, Glu-472, Asp-503, Asp-505, Asp-507, Glu-514, Asp-533, Asp-535, Asp-537, and Lys-539. The residue at position 541 (Ser-541) is a Phosphoserine. Glu-544 contributes to the Ca(2+) binding site.

The protein belongs to the protein kinase superfamily. Ser/Thr protein kinase family. CDPK subfamily.

The protein localises to the cell membrane. The protein resides in the nucleus. The catalysed reaction is L-seryl-[protein] + ATP = O-phospho-L-seryl-[protein] + ADP + H(+). It catalyses the reaction L-threonyl-[protein] + ATP = O-phospho-L-threonyl-[protein] + ADP + H(+). Activated by calcium. Autophosphorylation may play an important role in the regulation of the kinase activity. Its function is as follows. May play a role in signal transduction pathways that involve calcium as a second messenger. This Arabidopsis thaliana (Mouse-ear cress) protein is Calcium-dependent protein kinase 16 (CPK16).